We begin with the raw amino-acid sequence, 276 residues long: Diaminopimelate epimerase (276 aa).

Substrate contacts are provided by Asn13, Gln46, and Asn66. The Proton donor role is filled by Cys75. Substrate is bound by residues 76–77, Asn159, Asn192, and 210–211; these read GN and ER. The Proton acceptor role is filled by Cys219. 220-221 contacts substrate; the sequence is GT.

This sequence belongs to the diaminopimelate epimerase family. As to quaternary structure, homodimer.

It localises to the cytoplasm. The enzyme catalyses (2S,6S)-2,6-diaminopimelate = meso-2,6-diaminopimelate. It participates in amino-acid biosynthesis; L-lysine biosynthesis via DAP pathway; DL-2,6-diaminopimelate from LL-2,6-diaminopimelate: step 1/1. Its function is as follows. Catalyzes the stereoinversion of LL-2,6-diaminopimelate (L,L-DAP) to meso-diaminopimelate (meso-DAP), a precursor of L-lysine and an essential component of the bacterial peptidoglycan. In Aeromonas hydrophila subsp. hydrophila (strain ATCC 7966 / DSM 30187 / BCRC 13018 / CCUG 14551 / JCM 1027 / KCTC 2358 / NCIMB 9240 / NCTC 8049), this protein is Diaminopimelate epimerase.